A 431-amino-acid chain; its full sequence is Adenylosuccinate synthetase (431 aa).

GTP is bound by residues 12–18 (GDEGKGK) and 40–42 (GHT). Residue Asp-13 is the Proton acceptor of the active site. 2 residues coordinate Mg(2+): Asp-13 and Gly-40. Residues 13–16 (DEGK), 38–41 (NAGH), Thr-131, Arg-145, Gln-225, Thr-240, and Arg-304 contribute to the IMP site. The Proton donor role is filled by His-41. 300–306 (VNTGRRR) serves as a coordination point for substrate. Residues Arg-306, 332-334 (KLD), and 414-416 (STS) each bind GTP.

This sequence belongs to the adenylosuccinate synthetase family. Homodimer. It depends on Mg(2+) as a cofactor.

The protein localises to the cytoplasm. It catalyses the reaction IMP + L-aspartate + GTP = N(6)-(1,2-dicarboxyethyl)-AMP + GDP + phosphate + 2 H(+). The protein operates within purine metabolism; AMP biosynthesis via de novo pathway; AMP from IMP: step 1/2. Functionally, plays an important role in the de novo pathway of purine nucleotide biosynthesis. Catalyzes the first committed step in the biosynthesis of AMP from IMP. In Beijerinckia indica subsp. indica (strain ATCC 9039 / DSM 1715 / NCIMB 8712), this protein is Adenylosuccinate synthetase.